The following is a 692-amino-acid chain: Elongation factor G (692 aa).

The 276-residue stretch at 8-283 (NRIRNIGIAA…AVIDYLPAPT (276 aa)) folds into the tr-type G domain. GTP is bound by residues 17 to 24 (AHIDAGKT), 81 to 85 (DTPGH), and 135 to 138 (NKMD).

This sequence belongs to the TRAFAC class translation factor GTPase superfamily. Classic translation factor GTPase family. EF-G/EF-2 subfamily.

It is found in the cytoplasm. In terms of biological role, catalyzes the GTP-dependent ribosomal translocation step during translation elongation. During this step, the ribosome changes from the pre-translocational (PRE) to the post-translocational (POST) state as the newly formed A-site-bound peptidyl-tRNA and P-site-bound deacylated tRNA move to the P and E sites, respectively. Catalyzes the coordinated movement of the two tRNA molecules, the mRNA and conformational changes in the ribosome. This Helicobacter pylori (strain P12) protein is Elongation factor G.